Reading from the N-terminus, the 252-residue chain is MRILVSNDDGYTAPGLEALVQALQGLGELTVVAPETNHSGASNSLTLNRPLTVRTAANGFICVNGTPSDCVHVALTGLMDTRPDLVVSGINNGANMGDDTLYSGTVAAAAEGYLFGIPAIAFSLAEKGWAHIEAAARVARQVVERQVAQQLAAPVLLNVNIPSRPFEAMAGLQVTRLGKRHPSEPVVRTTTPYGDTVYWIGPVGLAADAAPGTDFHAVAQGAVSVTPLRLDLTQHSQLDEVRRWAEPLCASL.

Positions 8, 9, 39, and 91 each coordinate a divalent metal cation.

Belongs to the SurE nucleotidase family. The cofactor is a divalent metal cation.

The protein localises to the cytoplasm. It catalyses the reaction a ribonucleoside 5'-phosphate + H2O = a ribonucleoside + phosphate. Nucleotidase that shows phosphatase activity on nucleoside 5'-monophosphates. This chain is 5'-nucleotidase SurE, found in Bordetella petrii (strain ATCC BAA-461 / DSM 12804 / CCUG 43448).